A 456-amino-acid chain; its full sequence is Mitochondrial import inner membrane translocase subunit TIM50 (456 aa).

The N-terminal 22 residues, 1–22, are a transit peptide targeting the mitochondrion; sequence MSLSKLSQKCFSRHHARTFIRF. The Mitochondrial matrix portion of the chain corresponds to 23–171; sequence SSSDFQSLLG…RRKRMERNTR (149 aa). Disordered regions lie at residues 101–120 and 132–165; these read ETEK…AIDE and EEAA…RRKR. A compositionally biased stretch (polar residues) spans 137 to 153; the sequence is SKTSAPSGSSGDNNDQP. A helical membrane pass occupies residues 172–192; that stretch reads IGGYVLLGGSVIGFISFCFYY. Over 193 to 456 the chain is Mitochondrial intermembrane; that stretch reads GRAQRDEAGN…LFGFRRHASA (264 aa). Positions 247–391 constitute an FCP1 homology domain; it reads YLQPKYTIVI…VDLAELLKTI (145 aa).

This sequence belongs to the TIM50 family. In terms of assembly, component of the TIM23 complex at least composed of tim-23, tim-17 and tim-50.

It localises to the mitochondrion inner membrane. In terms of biological role, essential component of the TIM23 complex, a complex that mediates the translocation of transit peptide-containing proteins across the mitochondrial inner membrane. This Caenorhabditis briggsae protein is Mitochondrial import inner membrane translocase subunit TIM50 (scpl-4).